We begin with the raw amino-acid sequence, 352 residues long: Histidinol-phosphate aminotransferase (352 aa).

K216 is modified (N6-(pyridoxal phosphate)lysine).

This sequence belongs to the class-II pyridoxal-phosphate-dependent aminotransferase family. Histidinol-phosphate aminotransferase subfamily. Pyridoxal 5'-phosphate is required as a cofactor.

It catalyses the reaction L-histidinol phosphate + 2-oxoglutarate = 3-(imidazol-4-yl)-2-oxopropyl phosphate + L-glutamate. It participates in amino-acid biosynthesis; L-histidine biosynthesis; L-histidine from 5-phospho-alpha-D-ribose 1-diphosphate: step 7/9. In Methanoculleus marisnigri (strain ATCC 35101 / DSM 1498 / JR1), this protein is Histidinol-phosphate aminotransferase.